Consider the following 283-residue polypeptide: Protoheme IX farnesyltransferase (283 aa).

A run of 7 helical transmembrane segments spans residues 13 to 33 (ISSVVTLSAFAGFLIGSPTGL), 35 to 55 (GGTLLWTMLGTALCAGGVGTL), 90 to 110 (ILLVCLAVGLLCPLVNVLTAV), 156 to 176 (LGAGGWATFGILATWQMPHFL), 208 to 228 (MIGFAALLVPVSVLPVLTEAA), 230 to 250 (WIYGVGVVPLGLWFLWTTIVF), and 262 to 282 (VLKASVLYIPGLVALLLVDWF).

It belongs to the UbiA prenyltransferase family. Protoheme IX farnesyltransferase subfamily.

Its subcellular location is the cell inner membrane. It carries out the reaction heme b + (2E,6E)-farnesyl diphosphate + H2O = Fe(II)-heme o + diphosphate. The protein operates within porphyrin-containing compound metabolism; heme O biosynthesis; heme O from protoheme: step 1/1. Its function is as follows. Converts heme B (protoheme IX) to heme O by substitution of the vinyl group on carbon 2 of heme B porphyrin ring with a hydroxyethyl farnesyl side group. The protein is Protoheme IX farnesyltransferase of Salinibacter ruber (strain DSM 13855 / M31).